The sequence spans 155 residues: Transcriptional repressor NrdR (155 aa).

A zinc finger lies at 3–34 (CPNCHQNASRVIDSRPTDEGRTIRRRRECENC). An ATP-cone domain is found at 49–139 (LLVIKNDGTR…IYRQFTDMSS (91 aa)).

This sequence belongs to the NrdR family. Zn(2+) is required as a cofactor.

Functionally, negatively regulates transcription of bacterial ribonucleotide reductase nrd genes and operons by binding to NrdR-boxes. The sequence is that of Transcriptional repressor NrdR from Lactobacillus delbrueckii subsp. bulgaricus (strain ATCC 11842 / DSM 20081 / BCRC 10696 / JCM 1002 / NBRC 13953 / NCIMB 11778 / NCTC 12712 / WDCM 00102 / Lb 14).